Consider the following 245-residue polypeptide: 23S rRNA (guanosine-2'-O-)-methyltransferase RlmB (245 aa).

Residues Gly-197, Ile-217, and Leu-226 each contribute to the S-adenosyl-L-methionine site.

Belongs to the class IV-like SAM-binding methyltransferase superfamily. RNA methyltransferase TrmH family. RlmB subfamily.

It is found in the cytoplasm. It catalyses the reaction guanosine(2251) in 23S rRNA + S-adenosyl-L-methionine = 2'-O-methylguanosine(2251) in 23S rRNA + S-adenosyl-L-homocysteine + H(+). Specifically methylates the ribose of guanosine 2251 in 23S rRNA. In Bordetella parapertussis (strain 12822 / ATCC BAA-587 / NCTC 13253), this protein is 23S rRNA (guanosine-2'-O-)-methyltransferase RlmB.